The following is a 1349-amino-acid chain: Patatin-like phospholipase domain-containing protein 7 (1349 aa).

Over 1 to 36 (MQKEEDVCPEAGYCLGTALSSWGLHFMEEHSQSTML) the chain is Lumenal. Residues 37–57 (MGIGIGVLLTLAFVGLAAFFV) traverse the membrane as a helical segment. Residues 58–1349 (YRKVSRFRRA…DQGPRLYRPS (1292 aa)) lie on the Cytoplasmic side of the membrane. Residue 170–297 (VLGHFEKPLF…VRVVQIIMVR (128 aa)) coordinates a nucleoside 3',5'-cyclic phosphate. Residues 340–361 (MSYGPEEQLERSPRLSEFNSSD) form a disordered region. Phosphoserine is present on residues Ser341 and Ser377. A nucleoside 3',5'-cyclic phosphate-binding positions include 496–599 (FLHV…VVRR) and 610–715 (ALDW…LGEK). Residues 678 to 964 (VHAVRDSELA…RGCAQVGILR (287 aa)) are involved in the binding to lipid droplets. The PNPLA domain maps to 947–1113 (LVLGGGGARG…INNLPADVAR (167 aa)). The GXGXXG signature appears at 951–956 (GGGARG). The GXSXG motif lies at 978 to 982 (GTSIG). Ser980 (nucleophile) is an active-site residue. Residue Asp1100 is the Proton acceptor of the active site. Residues 1100 to 1102 (DGG) carry the DGA/G motif. Ser1277 carries the post-translational modification Phosphoserine. Phosphothreonine is present on Thr1281. Residues 1297-1349 (DFQSTGIELDSDSECEPSMSQGPHSLTSPKQSQDSFPWLPNQDDQGPRLYRPS) form a disordered region. A compositionally biased stretch (polar residues) spans 1314–1331 (SMSQGPHSLTSPKQSQDS).

The protein belongs to the NTE family. As to expression, expressed in the brain, liver, kidney, lung and testis.

The protein resides in the endoplasmic reticulum membrane. It localises to the lipid droplet. The catalysed reaction is a 1-acyl-sn-glycero-3-phosphocholine + H2O = sn-glycerol 3-phosphocholine + a fatty acid + H(+). The enzyme catalyses 1-(9Z-octadecenoyl)-sn-glycero-3-phosphocholine + H2O = sn-glycerol 3-phosphocholine + (9Z)-octadecenoate + H(+). It carries out the reaction 1-(9Z-octadecenoyl)-sn-glycero-3-phosphoethanolamine + H2O = sn-glycero-3-phosphoethanolamine + (9Z)-octadecenoate + H(+). It catalyses the reaction 1-(9Z-octadecenoyl)-sn-glycero-3-phospho-L-serine + H2O = sn-glycero-3-phospho-L-serine + (9Z)-octadecenoate + H(+). The catalysed reaction is 1-hexadecanoyl-sn-glycero-3-phosphocholine + H2O = sn-glycerol 3-phosphocholine + hexadecanoate + H(+). The enzyme catalyses 1-hexadecanoyl-sn-glycero-3-phosphate + H2O = sn-glycerol 3-phosphate + hexadecanoate + H(+). Functionally, lysophospholipase which preferentially deacylates unsaturated lysophosphatidylcholine (C18:1), generating glycerophosphocholine. Also can deacylate, to a lesser extent, lysophosphatidylethanolamine (C18:1), lysophosphatidyl-L-serine (C18:1) and lysophosphatidic acid (C16:0). The chain is Patatin-like phospholipase domain-containing protein 7 (Pnpla7) from Rattus norvegicus (Rat).